We begin with the raw amino-acid sequence, 235 residues long: Hydroxyacylglutathione hydrolase (235 aa).

Residues H53, H55, D57, H58, H109, D127, and H165 each coordinate Zn(2+).

Belongs to the metallo-beta-lactamase superfamily. Glyoxalase II family. As to quaternary structure, monomer. Zn(2+) serves as cofactor.

It catalyses the reaction an S-(2-hydroxyacyl)glutathione + H2O = a 2-hydroxy carboxylate + glutathione + H(+). It participates in secondary metabolite metabolism; methylglyoxal degradation; (R)-lactate from methylglyoxal: step 2/2. In terms of biological role, thiolesterase that catalyzes the hydrolysis of S-D-lactoyl-glutathione to form glutathione and D-lactic acid. The chain is Hydroxyacylglutathione hydrolase from Actinobacillus pleuropneumoniae serotype 7 (strain AP76).